The primary structure comprises 64 residues: Probable cytochrome c oxidase subunit 5C-1 (64 aa).

The chain crosses the membrane as a helical span at residues 15-34 (SVVKELFIGLALGLAAGGLW).

This sequence belongs to the cytochrome c oxidase subunit 5C family.

It is found in the mitochondrion inner membrane. This protein is one of the nuclear-coded polypeptide chains of cytochrome c oxidase, the terminal oxidase in mitochondrial electron transport. The protein is Probable cytochrome c oxidase subunit 5C-1 of Arabidopsis thaliana (Mouse-ear cress).